The sequence spans 190 residues: R46 site-specific recombinase (190 aa).

Positions 2-137 (RLFGYARVST…EGRQEAKLKG (136 aa)) constitute a Resolvase/invertase-type recombinase catalytic domain. Residue serine 10 is the O-(5'-phospho-DNA)-serine intermediate of the active site. A DNA-binding region (H-T-H motif) is located at residues 161-180 (ATDIARRLSIARSTVYKILE).

The protein belongs to the site-specific recombinase resolvase family.

Functionally, site-specific recombination protein. The sequence is that of R46 site-specific recombinase (tnpR) from Escherichia coli.